The primary structure comprises 1111 residues: Histone deacetylase 5 (1111 aa).

Lysine 35 is covalently cross-linked (Glycyl lysine isopeptide (Lys-Gly) (interchain with G-Cter in SUMO2)). Disordered stretches follow at residues 40 to 63 (GAMP…RGAL), 107 to 136 (RQHE…EQQR), and 187 to 272 (KEPT…SSPL). The segment covering 238 to 249 (DSRDDFPLRKTA) has biased composition (basic and acidic residues). Serine 250 is subject to Phosphoserine; by AMPK, CaMK1, SIK1 and PKD/PRKD1. Positions 263–272 (KVAERRSSPL) are enriched in basic and acidic residues. A Phosphothreonine; by PKC modification is found at threonine 283. A disordered region spans residues 474–495 (TVGKLPRHRPLSRTQSSPLPQS). The segment covering 485–495 (SRTQSSPLPQS) has biased composition (low complexity). Serine 489 is subject to Phosphoserine; by AMPK, CaMK1, SIK1 and PKD/PRKD1. The residue at position 524 (lysine 524) is an N6-acetyllysine. 2 disordered regions span residues 527–611 (TKTG…LEES) and 645–666 (LGRT…DQPT). A compositionally biased stretch (acidic residues) spans 572–610 (STQEDLEEEEDEEEEDEDCIQVKDEEGESGPDEGPDLEE). Residues serine 600 and serine 650 each carry the phosphoserine modification. The histone deacetylase stretch occupies residues 671–1017 (TTGVVYDTFM…VSALLSVELQ (347 aa)). Residues cysteine 685, cysteine 687, histidine 693, and cysteine 770 each coordinate Zn(2+). The active site involves histidine 822. The Nuclear export signal motif lies at 1070-1109 (EEAETVSAMALLSVGAEQAQAVATQEHSPRPAEEPMEQEP). The interval 1086–1111 (EQAQAVATQEHSPRPAEEPMEQEPTL) is disordered. Serine 1097 bears the Phosphoserine mark.

This sequence belongs to the histone deacetylase family. HD type 2 subfamily. In terms of assembly, interacts with AHRR, BAHD1, BCOR, HDAC7, HDAC9, CTBP1, MEF2C, NCOR2, NRIP1, PHB2 and a 14-3-3 chaperone protein. Interacts with BCL6, DDIT3/CHOP, GRK5, KDM5B and MYOCD. Interacts with EP300 in the presence of TFAP2C. Interacts with ANKRA2. Interacts with CUL7 (as part of the 3M complex); negatively regulated by ANKRA2. Interacts with ZBTB7B; the interaction allows the recruitment of HDAC4 on CD8 loci for deacetylation and possible inhibition of CD8 genes expression. Interacts with RARA. Post-translationally, phosphorylated by AMPK, CaMK1, SIK1 and PRKD1 at Ser-250 and Ser-489. The phosphorylation is required for the export to the cytoplasm and inhibition. Phosphorylated by the PKC kinases PKN1 and PKN2, impairing nuclear import. Phosphorylated by GRK5, leading to nuclear export of HDAC5 and allowing MEF2-mediated transcription. Ubiquitinated. Polyubiquitination however does not lead to its degradation.

It localises to the nucleus. Its subcellular location is the cytoplasm. The enzyme catalyses N(6)-acetyl-L-lysyl-[histone] + H2O = L-lysyl-[histone] + acetate. Its function is as follows. Responsible for the deacetylation of lysine residues on the N-terminal part of the core histones (H2A, H2B, H3 and H4). Histone deacetylation gives a tag for epigenetic repression and plays an important role in transcriptional regulation, cell cycle progression and developmental events. Histone deacetylases act via the formation of large multiprotein complexes. Involved in muscle maturation by repressing transcription of myocyte enhancer MEF2C. During muscle differentiation, it shuttles into the cytoplasm, allowing the expression of myocyte enhancer factors. Serves as a corepressor of RARA and causes its deacetylation. In association with RARA, plays a role in the repression of microRNA-10a and thereby in the inflammatory response. The sequence is that of Histone deacetylase 5 (HDAC5) from Cricetulus griseus (Chinese hamster).